Here is a 55-residue protein sequence, read N- to C-terminus: Large ribosomal subunit protein bL33 (55 aa).

The protein belongs to the bacterial ribosomal protein bL33 family.

This chain is Large ribosomal subunit protein bL33, found in Alcanivorax borkumensis (strain ATCC 700651 / DSM 11573 / NCIMB 13689 / SK2).